A 185-amino-acid chain; its full sequence is Peptidyl-tRNA hydrolase (185 aa).

Residue Y14 participates in tRNA binding. The Proton acceptor role is filled by H19. TRNA is bound by residues Y64, N66, and N112.

The protein belongs to the PTH family. Monomer.

Its subcellular location is the cytoplasm. The enzyme catalyses an N-acyl-L-alpha-aminoacyl-tRNA + H2O = an N-acyl-L-amino acid + a tRNA + H(+). Functionally, hydrolyzes ribosome-free peptidyl-tRNAs (with 1 or more amino acids incorporated), which drop off the ribosome during protein synthesis, or as a result of ribosome stalling. Catalyzes the release of premature peptidyl moieties from peptidyl-tRNA molecules trapped in stalled 50S ribosomal subunits, and thus maintains levels of free tRNAs and 50S ribosomes. This Shouchella clausii (strain KSM-K16) (Alkalihalobacillus clausii) protein is Peptidyl-tRNA hydrolase.